Consider the following 214-residue polypeptide: Outer-membrane lipoprotein LolB (214 aa).

An N-terminal signal peptide occupies residues 1–25; that stretch reads MNNLKRLTKTIFSCFTLSALLLLAG. Residue Cys26 is the site of N-palmitoyl cysteine attachment. Cys26 is lipidated: S-diacylglycerol cysteine.

It belongs to the LolB family. As to quaternary structure, monomer.

It is found in the cell outer membrane. Its function is as follows. Plays a critical role in the incorporation of lipoproteins in the outer membrane after they are released by the LolA protein. In Shewanella baltica (strain OS155 / ATCC BAA-1091), this protein is Outer-membrane lipoprotein LolB.